A 543-amino-acid polypeptide reads, in one-letter code: Zinc finger protein 280B (543 aa).

M1 bears the N-acetylmethionine mark. Acidic residues predominate over residues 1–10 (MEQSCEEEKE). Positions 1 to 23 (MEQSCEEEKEPEPQKNIQETKQV) are disordered. 2 positions are modified to phosphoserine: S68 and S70. The segment at 105–138 (SQLESRSTDSPIIIEPLSKPDYRNSSPQVVPNNS) is disordered. Residues 128–138 (NSSPQVVPNNS) show a composition bias toward low complexity. Glycyl lysine isopeptide (Lys-Gly) (interchain with G-Cter in SUMO2) cross-links involve residues K173, K247, and K261. 4 consecutive C2H2-type zinc fingers follow at residues 343 to 366 (TTCQHCHRQFPTPFQLQCHIENVH), 373 to 396 (TVCKICELSFETDQVLLQHMKDHH), 432 to 454 (LLCPFCLKIFKTATPYMCHYRGH), and 460 to 483 (HQCSKCRLQFLTFKEKMEHKTQCH). The interval 518-543 (ASITVSTSDSEPSLPRSKSKISKKSH) is disordered. The segment covering 534–543 (SKSKISKKSH) has biased composition (basic residues).

It localises to the nucleus. Functionally, may function as a transcription factor. The protein is Zinc finger protein 280B (ZNF280B) of Homo sapiens (Human).